The primary structure comprises 203 residues: Endothelin-1 (203 aa).

The signal sequence occupies residues 1–25 (MDYFPMIIALLFVAFQGAPETAVLG). Residues 26–50 (AELSPEAESQGETPSPHASWRPRRS) constitute a propeptide that is removed on maturation. Residues 27–48 (ELSPEAESQGETPSPHASWRPR) are disordered. Cystine bridges form between C53-C67 and C55-C63. The propeptide occupies 83-203 (YGLGSPSRSR…DKKVTHNRTH (121 aa)). Residues 110–124 (CQCASQKDKKCWSFC) form an endothelin-like region. The N-linked (GlcNAc...) asparagine glycan is linked to N200.

This sequence belongs to the endothelin/sarafotoxin family.

Its subcellular location is the secreted. Functionally, endothelins are endothelium-derived vasoconstrictor peptides. Probable ligand for G-protein coupled receptors EDNRA and EDNRB which activates PTK2B, BCAR1, BCAR3 and, GTPases RAP1 and RHOA cascade in glomerular mesangial cells. Also binds the DEAR/FBXW7-AS1 receptor. Promotes mesenteric arterial wall remodeling via activation of ROCK signaling and subsequent colocalization of NFATC3 with F-actin filaments. NFATC3 then translocates to the nucleus where it subsequently promotes the transcription of the smooth muscle hypertrophy and differentiation marker ACTA2. This chain is Endothelin-1 (EDN1), found in Sus scrofa (Pig).